The sequence spans 1220 residues: DNA-directed RNA polymerase subunit beta' (1220 aa).

Residues cysteine 61, cysteine 63, cysteine 76, and cysteine 79 each coordinate Zn(2+). The Mg(2+) site is built by aspartate 450, aspartate 452, and aspartate 454. Positions 1197-1220 are disordered; sequence QPESESEEASDIPKLDDVAKTFDN. Residues 1207–1220 show a composition bias toward basic and acidic residues; it reads DIPKLDDVAKTFDN.

Belongs to the RNA polymerase beta' chain family. In terms of assembly, the RNAP catalytic core consists of 2 alpha, 1 beta, 1 beta' and 1 omega subunit. When a sigma factor is associated with the core the holoenzyme is formed, which can initiate transcription. Mg(2+) serves as cofactor. Requires Zn(2+) as cofactor.

It carries out the reaction RNA(n) + a ribonucleoside 5'-triphosphate = RNA(n+1) + diphosphate. DNA-dependent RNA polymerase catalyzes the transcription of DNA into RNA using the four ribonucleoside triphosphates as substrates. The chain is DNA-directed RNA polymerase subunit beta' from Leuconostoc mesenteroides subsp. mesenteroides (strain ATCC 8293 / DSM 20343 / BCRC 11652 / CCM 1803 / JCM 6124 / NCDO 523 / NBRC 100496 / NCIMB 8023 / NCTC 12954 / NRRL B-1118 / 37Y).